A 229-amino-acid polypeptide reads, in one-letter code: General odorant-binding protein 69 (229 aa).

A signal peptide spans M1–G20. C66 and C106 are oxidised to a cystine.

The protein belongs to the PBP/GOBP family.

It is found in the secreted. Present in the aqueous fluid surrounding olfactory sensory dendrites and are thought to aid in the capture and transport of hydrophobic odorants into and through this fluid. This is General odorant-binding protein 69 (Obp69) from Anopheles gambiae (African malaria mosquito).